The chain runs to 377 residues: Peroxisomal membrane protein PEX14 (377 aa).

Residues 1–20 show a composition bias toward low complexity; the sequence is MASSEQAEQPSQPSSSPGSE. The disordered stretch occupies residues 1–23; the sequence is MASSEQAEQPSQPSSSPGSENVV. Ala-2 carries the post-translational modification N-acetylalanine. The Peroxisomal portion of the chain corresponds to 2 to 108; it reads ASSEQAEQPS…CSPGSSRWRD (107 aa). Lys-34 carries the post-translational modification N6-acetyllysine. A helical membrane pass occupies residues 109 to 126; the sequence is YGALAIIMAGIAFGFHQL. Over 127 to 377 the chain is Cytoplasmic; that stretch reads YKKYLLPLIL…EGASNESERH (251 aa). A disordered region spans residues 230–377; it reads PPSPSAPKIP…EGASNESERH (148 aa). Ser-232 carries the post-translational modification Phosphoserine. Composition is skewed to low complexity over residues 244–259 and 265–275; these read PVKS…VNHH and SPVSNESTSSS. Phosphoserine occurs at positions 282 and 335. Acidic residues predominate over residues 323–342; sequence KEEEEEEEEEDVSHVDEEDV. Residues 360 to 377 are compositionally biased toward basic and acidic residues; it reads QVDKLRRPEGASNESERH.

It belongs to the peroxin-14 family. As to quaternary structure, interacts with PEX13; forming the PEX13-PEX14 docking complex. Interacts with PEX5 (via WxxxF/Y motifs). Interacts with PEX19. Interacts with tubulin.

The protein localises to the peroxisome membrane. Functionally, component of the PEX13-PEX14 docking complex, a translocon channel that specifically mediates the import of peroxisomal cargo proteins bound to PEX5 receptor. The PEX13-PEX14 docking complex forms a large import pore which can be opened to a diameter of about 9 nm. Mechanistically, PEX5 receptor along with cargo proteins associates with the PEX14 subunit of the PEX13-PEX14 docking complex in the cytosol, leading to the insertion of the receptor into the organelle membrane with the concomitant translocation of the cargo into the peroxisome matrix. Plays a key role for peroxisome movement through a direct interaction with tubulin. This chain is Peroxisomal membrane protein PEX14, found in Cricetulus longicaudatus (Long-tailed dwarf hamster).